The sequence spans 357 residues: Alanine racemase (357 aa).

Lys34 acts as the Proton acceptor; specific for D-alanine in catalysis. Lys34 carries the N6-(pyridoxal phosphate)lysine modification. Arg127 contacts substrate. The active-site Proton acceptor; specific for L-alanine is the Tyr252. Met301 provides a ligand contact to substrate.

The protein belongs to the alanine racemase family. Pyridoxal 5'-phosphate serves as cofactor.

It catalyses the reaction L-alanine = D-alanine. The protein operates within amino-acid biosynthesis; D-alanine biosynthesis; D-alanine from L-alanine: step 1/1. In terms of biological role, catalyzes the interconversion of L-alanine and D-alanine. May also act on other amino acids. This Dichelobacter nodosus (strain VCS1703A) protein is Alanine racemase (alr).